An 82-amino-acid chain; its full sequence is Small ribosomal subunit protein bS18 (82 aa).

The tract at residues 1-20 (MVDINQIPTRRPFHRRHKTC) is disordered.

The protein belongs to the bacterial ribosomal protein bS18 family. In terms of assembly, part of the 30S ribosomal subunit. Forms a tight heterodimer with protein bS6.

Binds as a heterodimer with protein bS6 to the central domain of the 16S rRNA, where it helps stabilize the platform of the 30S subunit. This is Small ribosomal subunit protein bS18 from Brucella suis (strain ATCC 23445 / NCTC 10510).